The sequence spans 556 residues: 2-succinyl-5-enolpyruvyl-6-hydroxy-3-cyclohexene-1-carboxylate synthase (556 aa).

This sequence belongs to the TPP enzyme family. MenD subfamily. Homodimer. Mg(2+) is required as a cofactor. Mn(2+) serves as cofactor. The cofactor is thiamine diphosphate.

It carries out the reaction isochorismate + 2-oxoglutarate + H(+) = 5-enolpyruvoyl-6-hydroxy-2-succinyl-cyclohex-3-ene-1-carboxylate + CO2. Its pathway is quinol/quinone metabolism; 1,4-dihydroxy-2-naphthoate biosynthesis; 1,4-dihydroxy-2-naphthoate from chorismate: step 2/7. The protein operates within quinol/quinone metabolism; menaquinone biosynthesis. Catalyzes the thiamine diphosphate-dependent decarboxylation of 2-oxoglutarate and the subsequent addition of the resulting succinic semialdehyde-thiamine pyrophosphate anion to isochorismate to yield 2-succinyl-5-enolpyruvyl-6-hydroxy-3-cyclohexene-1-carboxylate (SEPHCHC). This Salmonella dublin (strain CT_02021853) protein is 2-succinyl-5-enolpyruvyl-6-hydroxy-3-cyclohexene-1-carboxylate synthase.